Reading from the N-terminus, the 639-residue chain is E3 ubiquitin-protein ligase RNF12 (639 aa).

Disordered stretches follow at residues 1-28, 67-403, and 467-534; these read MESA…RLDR, RLQQ…ESER, and NDTD…GGVT. Over residues 11–21 the composition is skewed to low complexity; it reads STEQSESQRQS. 2 stretches are compositionally biased toward polar residues: residues 110-138 and 147-166; these read SVRQ…NPNS and INVN…QSSE. Basic and acidic residues predominate over residues 213–228; it reads RSPDQRRTRARTDRSR. Positions 244–253 are enriched in polar residues; sequence HSSSQTVDAS. A compositionally biased stretch (low complexity) spans 269 to 286; that stretch reads SSQMQNSSSSNETEGSSR. Residues 290-302 show a composition bias toward polar residues; that stretch reads HITARQQALGTEG. Composition is skewed to low complexity over residues 303–327 and 335–348; these read QSQS…SQST and SRSS…DSSS. The span at 349–358 shows a compositional bias: polar residues; that stretch reads NAETTGTGQR. The segment covering 372–382 has biased composition (basic and acidic residues); it reads RPGDYRQRDSI. The span at 383-399 shows a compositional bias: polar residues; that stretch reads ANRTRSRSQTPNNTVTY. 2 stretches are compositionally biased toward pro residues: residues 473-482 and 493-506; these read NPTPVSPPAA and PEPP…PEPV. Residues 585-626 form an RING-type; atypical zinc finger; it reads CSVCITEYTEGNKLRKLPCSHEYHVHCIDRWLSENSTCPICR. The PDZ-binding motif lies at 636 to 639; that stretch reads ESIV.

The protein belongs to the RNF12 family. As to quaternary structure, forms homodimers through the C-terminal region. The N-terminus interacts with the homeobox of LIM/homeobox factor lhx1/lim1, with lhx3/lim3 and lhx5/lim5, and with the N-terminus of ldb1.

It localises to the nucleus. It catalyses the reaction S-ubiquitinyl-[E2 ubiquitin-conjugating enzyme]-L-cysteine + [acceptor protein]-L-lysine = [E2 ubiquitin-conjugating enzyme]-L-cysteine + N(6)-ubiquitinyl-[acceptor protein]-L-lysine.. It participates in protein modification; protein ubiquitination. Its function is as follows. Acts as an E3 ubiquitin-protein ligase specific for ldb1, mediating ubiquitination and proteasome-dependent degradation of excess ldb1 in a RING-dependent manner. Does not degrade ldb1 bound to lhx1/lim1, nor lim1 itself and thus contributes to the establishment of proper ldb1-lhx1/lim1 stoichiometry and the formation of a ldb1-lhx1/lim1 complex. Interferes with Spemann organizer function and suppresses secondary axis formation induced by ldb1 and lhx1/lim1. In Xenopus tropicalis (Western clawed frog), this protein is E3 ubiquitin-protein ligase RNF12.